Here is a 324-residue protein sequence, read N- to C-terminus: Interactor of constitutive active ROPs 4 (324 aa).

Disordered regions lie at residues 1-74 (MPKP…SGLE), 91-156 (LAKA…ASKE), 175-201 (SLSEENETLKDQLKKTDTEMSCAKAKE), and 289-324 (FVGSPGMADDSDDGSGKRKSSGKKMFGDLWKKKGQK). Over residues 13 to 28 (QRQSPRLRTSLLSTSS) the composition is skewed to low complexity. Composition is skewed to basic and acidic residues over residues 29–50 (DPHHLSRPITDRSPKLGLDRRS), 95–106 (EAAKKRAQEELH), and 118–156 (PERDDIPGDGHQETDVFEVLDEKAKESEKTKNDELASKE). A coiled-coil region spans residues 62–266 (SQKKLGSRIS…ADAAAAVLSG (205 aa)). The span at 313–324 (MFGDLWKKKGQK) shows a compositional bias: basic and acidic residues.

Belongs to the ICR family. As to quaternary structure, interacts with ARAC11 in vitro.

In terms of biological role, acts as a scaffold, mediating interaction of ROPs with different proteins. The sequence is that of Interactor of constitutive active ROPs 4 (ICR4) from Arabidopsis thaliana (Mouse-ear cress).